The sequence spans 433 residues: MPILPVPALNALLTKTIKTIKTGAAKNAHQHHVLHHTLKGLDNLPAPVLERINRRLKASTAEQYPLADAHLRLILAISNKLKRPLAIDKLPKLRQKFGTDAVSLQAPSVWQQNADASGSTENAVSWQDKTIANADGGDMTVRCYQKSTQNSERKSTDEAAMLFFHGGGFCIGDIDTHHEFCHTVCAQTGWAVVSVDYRMAPEYPAPTALKDCLAAYAWLAEHSQSLGASPSRIVLSGDSAGGCLAALVAQQVIKPIDALWQDNNQAPAADKKVNDTFKNSLADLPRPLAQLPLYPVTDYEAEYPSWELYGEGLLLDHNDAEVFNSAYTQHSGLPQSHPLISVMHGDNTQLCPSYIVVAELDILRDEGLAYAELLQKEGVQVQTYTVLGAPHGFINLMSVHQGLGNQTTYIINEFACLVQNLLTSEGDKPNLRA.

The Involved in the stabilization of the negatively charged intermediate by the formation of the oxyanion hole motif lies at 165–167; the sequence is HGG. Serine 239 functions as the Charge relay system in the catalytic mechanism. Active-site residues include aspartate 361 and histidine 391.

The protein belongs to the 'GDXG' lipolytic enzyme family.

The catalysed reaction is a triacylglycerol + H2O = a diacylglycerol + a fatty acid + H(+). The sequence is that of Lipase 2 (lip2) from Moraxella sp. (strain TA144).